The following is a 279-amino-acid chain: MSDDDQKPEDATPDGSEPAENQPDGETPAAGEGAPDQAGLPGWGSSDKRRGRRSGPMKKGGDARAAKQMFERVKTARGRKSSSTRWLQRQLNDPYVKKAQMEGYRSRAAYKLLQLDERFKLLKPGMRVVDLGSAPGGWVQVALKSGASEVVGIDLLEMEAIAGATLLEKDFTDADAPSLVKAEMGGAADAVVSDLAPWTTGHKTTDHLRIVALAELAAHFAVETLKPGGFFIAKVFQGGSDSDLLNFLKANFEKVRHFKPDASRSESAETFVVAMGFKG.

A compositionally biased stretch (basic and acidic residues) spans 1–10; the sequence is MSDDDQKPED. Positions 1–66 are disordered; the sequence is MSDDDQKPED…MKKGGDARAA (66 aa). Gly136, Trp138, Asp154, Asp170, and Asp194 together coordinate S-adenosyl-L-methionine. The active-site Proton acceptor is Lys234.

The protein belongs to the class I-like SAM-binding methyltransferase superfamily. RNA methyltransferase RlmE family.

The protein resides in the cytoplasm. It carries out the reaction uridine(2552) in 23S rRNA + S-adenosyl-L-methionine = 2'-O-methyluridine(2552) in 23S rRNA + S-adenosyl-L-homocysteine + H(+). Its function is as follows. Specifically methylates the uridine in position 2552 of 23S rRNA at the 2'-O position of the ribose in the fully assembled 50S ribosomal subunit. The chain is Ribosomal RNA large subunit methyltransferase E from Maricaulis maris (strain MCS10) (Caulobacter maris).